Reading from the N-terminus, the 203-residue chain is Sarcosine oxidase subunit gamma (203 aa).

It belongs to the SoxG family. Heterotetramer composed of subunits alpha (SoxA), beta (SoxB), gamma (SoxG) and delta (SoxD).

It is found in the cytoplasm. The catalysed reaction is sarcosine + (6S)-5,6,7,8-tetrahydrofolate + O2 = (6R)-5,10-methylene-5,6,7,8-tetrahydrofolate + glycine + H2O2. It carries out the reaction sarcosine + O2 + H2O = formaldehyde + glycine + H2O2. Functionally, in the presence of tetrahydrofolate, catalyzes the oxidative demethylation of sarcosine to yield glycine, 5,10-methylenetetrahydrofolate and hydrogen peroxide. In the absence of tetrahydrofolate, catalyzes the oxidative demethylation of sarcosine to yield glycine, formaldehyde and hydrogen peroxide. In Corynebacterium sp. (strain P-1), this protein is Sarcosine oxidase subunit gamma.